A 243-amino-acid polypeptide reads, in one-letter code: MAGSGSSAPWGKHLLHAVLMVLVALVLLHSALAQSHRDFAPPGQQRREAPVDLLTQIGRSVRETLDTWIGPETMHLISETLSQVMWAISSAISVAFFALSGIAAQLLTALGLDGDHLTQGLKLSPSQVQTFLLWGAGALVVYWLLSLLLGLVLAVLGRILGGLKLVIFLAGFVALVRSVPDPSTRALLLLALLTLYALLSRLTGSRASGAQLEAKVRGLERQVDELRWRQRRAAKGARSVEEE.

An N-terminal signal peptide occupies residues 1 to 33; sequence MAGSGSSAPWGKHLLHAVLMVLVALVLLHSALA. The Lumenal portion of the chain corresponds to 34 to 83; it reads QSHRDFAPPGQQRREAPVDLLTQIGRSVRETLDTWIGPETMHLISETLSQ. Residues 84-104 traverse the membrane as a helical segment; it reads VMWAISSAISVAFFALSGIAA. Residues 105–135 lie on the Cytoplasmic side of the membrane; the sequence is QLLTALGLDGDHLTQGLKLSPSQVQTFLLWG. The helical transmembrane segment at 136–156 threads the bilayer; sequence AGALVVYWLLSLLLGLVLAVL. The Lumenal portion of the chain corresponds to 157-185; the sequence is GRILGGLKLVIFLAGFVALVRSVPDPSTR. Residues 186-205 form a helical membrane-spanning segment; sequence ALLLLALLTLYALLSRLTGS. Over 206-243 the chain is Cytoplasmic; the sequence is RASGAQLEAKVRGLERQVDELRWRQRRAAKGARSVEEE.

Homooligomer. Interacts with CRYAB; in the cellular response to DNA damage. The N-terminus is blocked. As to expression, widely expressed. Expressed in skeletal, cardiac and smooth muscle cells, in brain, including neuroglial cells, cerebral cortex neurons and cerebellum, but not Purkinje cells. Also detected in Paneth and Goblet cells of the small intestine (but not in the epithelium), duodenal gland, pancreas, parotid gland, testis, thyroid gland and adrenal gland, as well as in epidermis, choroid plexus, ductus epididymidis, lymphocytes, fibroblasts, endothelial cells and seminiferous epithelial cells (at protein level). Not detected in mucous cells of the duodenal gland, in hepatocytes nor in uriniferous tubules.

It is found in the nucleus outer membrane. The protein resides in the endoplasmic reticulum membrane. Its subcellular location is the sarcoplasmic reticulum membrane. It catalyses the reaction K(+)(in) = K(+)(out). The catalysed reaction is Ca(2+)(in) = Ca(2+)(out). Its function is as follows. Functions as a voltage-gated monoatomic cation channel permeable to both potassium and calcium. Plays a role in the cellular response to DNA damage. This chain is Voltage-gated monoatomic cation channel TMEM109, found in Oryctolagus cuniculus (Rabbit).